We begin with the raw amino-acid sequence, 247 residues long: RNA-free ribonuclease P (247 aa).

Belongs to the HARP family.

It catalyses the reaction Endonucleolytic cleavage of RNA, removing 5'-extranucleotides from tRNA precursor.. RNA-free RNase P that catalyzes the removal of the 5'-leader sequence from pre-tRNA to produce the mature 5'-terminus. The polypeptide is RNA-free ribonuclease P (Methanosarcina mazei (strain ATCC BAA-159 / DSM 3647 / Goe1 / Go1 / JCM 11833 / OCM 88) (Methanosarcina frisia)).